The chain runs to 154 residues: MAGLAGRPGSWGGLVLRVGQALFAAACIGVMGSSLGFASYTAFCYLIASMGLQMLWSFGLACLDGYAIRANKDLTSPILLSLFVVGDWVTAILSFAASSSAAGVVILFQKDVLFCRRYPQLPCGKYELATAFAFLSWALSATSALIMFWLLAAF.

The Cytoplasmic segment spans residues 1 to 17 (MAGLAGRPGSWGGLVLR). Residues 18–38 (VGQALFAAACIGVMGSSLGFA) traverse the membrane as a helical segment. Over 39–42 (SYTA) the chain is Extracellular. A helical transmembrane segment spans residues 43-63 (FCYLIASMGLQMLWSFGLACL). The Cytoplasmic segment spans residues 64–87 (DGYAIRANKDLTSPILLSLFVVGD). A helical membrane pass occupies residues 88–107 (WVTAILSFAASSSAAGVVIL). The Extracellular segment spans residues 108–130 (FQKDVLFCRRYPQLPCGKYELAT). Residues 131-151 (AFAFLSWALSATSALIMFWLL) form a helical membrane-spanning segment. The Cytoplasmic portion of the chain corresponds to 152-154 (AAF).

Belongs to the Casparian strip membrane proteins (CASP) family. In terms of assembly, homodimer and heterodimers.

It is found in the cell membrane. The sequence is that of CASP-like protein 5B2 from Zea mays (Maize).